The sequence spans 991 residues: Phosphate metabolism protein 7 (991 aa).

Over 1 to 9 (MADSSSTSA) the chain is Extracellular. A helical transmembrane segment spans residues 10–30 (FISTLIIYGLTAVVFVWLFLL). The Cytoplasmic segment spans residues 31-91 (LRPKNRRVYE…TSVDGYFLLR (61 aa)). A helical transmembrane segment spans residues 92-112 (YIGIVGSLSFVGCLLLLPILL). At 113–138 (PVNATNGNNLQGFELLSFSNVTNKNR) the chain is on the extracellular side. Residues asparagine 115 and asparagine 132 are each glycosylated (N-linked (GlcNAc...) asparagine). Residues 139–159 (FYAHVFLSWIFFGLFTYVIYK) traverse the membrane as a helical segment. Residues 160-388 (ELYYYVVFRH…ERHSRRAVAN (229 aa)) are Cytoplasmic-facing. Residues 389–409 (TIMVLLIIFWAFPVAVVGIIS) form a helical membrane-spanning segment. Topologically, residues 410-437 (NVNFLTDKVPFLRFINNMPTFLMGVITG) are extracellular. Residues 438 to 458 (LLPTIALVVLMSLVPPFIVML) form a helical membrane-spanning segment. Over 459–471 (GKLSGCVTRQETD) the chain is Cytoplasmic. The chain crosses the membrane as a helical span at residues 472–492 (LYSQAWYYAFAVIQIFLVVTA). The Extracellular segment spans residues 493–523 (TSSASSTVDSIIDRPRSAMTLLANNLPKASN). The chain crosses the membrane as a helical span at residues 524–544 (FYIMYFILKGLTGPTWTILQA). The Cytoplasmic segment spans residues 545 to 582 (VNLLLSKVLGRVLDSTPRQKWNRYNTLATPRMGIVYPG). A helical transmembrane segment spans residues 583–603 (IEILVCIYICYSIIAPILLFF). Serine 604 is a topological domain (extracellular). The chain crosses the membrane as a helical span at residues 605–625 (TVMLTLLYVAYLYNLNYVFGF). The Cytoplasmic segment spans residues 626-637 (SFDLKGRNYPRA). A helical transmembrane segment spans residues 638–658 (LFQIFVGIYLSEVCLLGLFIM). Over 659–661 (AKT) the chain is Extracellular. The chain crosses the membrane as a helical span at residues 662-682 (WGPLVLEVFWIVVTALAHIYM). The Cytoplasmic portion of the chain corresponds to 683 to 991 (KRKFIPLFDA…PPDYEPEAKK (309 aa)). The segment at 749–787 (KANLIPDNDGSSENGTPSNPFESGSERASLSGSNAESDS) is disordered. Positions 757–785 (DGSSENGTPSNPFESGSERASLSGSNAES) are enriched in polar residues.

It belongs to the CSC1 (TC 1.A.17) family.

Its subcellular location is the cell membrane. Functionally, acts as an osmosensitive calcium-permeable cation channel. This chain is Phosphate metabolism protein 7 (PHM7), found in Saccharomyces cerevisiae (strain ATCC 204508 / S288c) (Baker's yeast).